We begin with the raw amino-acid sequence, 1155 residues long: ATP-dependent helicase/deoxyribonuclease subunit B (1155 aa).

In terms of domain architecture, UvrD-like helicase ATP-binding spans Met-1 to Arg-278. Gly-9–Ser-16 is a binding site for ATP. Positions Thr-270–Val-584 constitute a UvrD-like helicase C-terminal domain. [4Fe-4S] cluster is bound by residues Cys-785, Cys-1112, Cys-1115, and Cys-1121.

This sequence belongs to the helicase family. AddB/RexB type 1 subfamily. As to quaternary structure, heterodimer of AddA and AddB. The cofactor is Mg(2+). It depends on [4Fe-4S] cluster as a cofactor.

Its function is as follows. The heterodimer acts as both an ATP-dependent DNA helicase and an ATP-dependent, dual-direction single-stranded exonuclease. Recognizes the chi site generating a DNA molecule suitable for the initiation of homologous recombination. The AddB subunit has 5' -&gt; 3' nuclease activity but not helicase activity. The protein is ATP-dependent helicase/deoxyribonuclease subunit B of Staphylococcus carnosus (strain TM300).